The primary structure comprises 269 residues: uncharacterized protein (269 aa).

NADP(+) is bound at residue 15-41 (QKSVLITGCSSGIGLESALELKRQGFH). Ser146 is a binding site for substrate. Tyr159 acts as the Proton acceptor in catalysis.

Belongs to the short-chain dehydrogenases/reductases (SDR) family.

This is an uncharacterized protein from Escherichia coli O6:H1 (strain CFT073 / ATCC 700928 / UPEC).